Consider the following 579-residue polypeptide: Fatty-acid amide hydrolase 1 (579 aa).

The chain crosses the membrane as a helical span at residues 9–29; it reads ALPGASGVALACCFVAAAVAL. Residues 30-403 are Cytoplasmic-facing; that stretch reads RWSGRRTARG…GDFVDPCLGD (374 aa). Lys142 (charge relay system) is an active-site residue. Residues Met191, Ser217, and 238–241 contribute to the substrate site; that span reads IGGS. The active-site Charge relay system is Ser217. Catalysis depends on Ser241, which acts as the Acyl-ester intermediate. Ser241 is subject to Phosphoserine. The stretch at 404 to 433 is an intramembrane region; that stretch reads LVSILKLPQWLKGLLAFLVKPLLPRLSAFL. The Cytoplasmic segment spans residues 434-579; sequence SNMKSRSAGK…RLMTPEKQSS (146 aa).

It belongs to the amidase family. As to quaternary structure, homodimer. In terms of tissue distribution, highly expressed in the brain, small intestine, pancreas, skeletal muscle and testis. Also expressed in the kidney, liver, lung, placenta and prostate.

The protein localises to the endomembrane system. It is found in the cytoplasm. It localises to the cytoskeleton. The catalysed reaction is N-(5Z,8Z,11Z,14Z-eicosatetraenoyl)-ethanolamine + H2O = ethanolamine + (5Z,8Z,11Z,14Z)-eicosatetraenoate. It catalyses the reaction (9Z)-octadecenamide + H2O = (9Z)-octadecenoate + NH4(+). It carries out the reaction 2-(5Z,8Z,11Z,14Z-eicosatetraenoyl)-glycerol + H2O = glycerol + (5Z,8Z,11Z,14Z)-eicosatetraenoate + H(+). The enzyme catalyses N-(9Z-octadecenoyl) ethanolamine + H2O = ethanolamine + (9Z)-octadecenoate. The catalysed reaction is N-hexadecanoylethanolamine + H2O = ethanolamine + hexadecanoate. It catalyses the reaction hexadecanamide + H2O = hexadecanoate + NH4(+). It carries out the reaction tetradecamide + H2O = tetradecanoate + NH4(+). The enzyme catalyses N-(9Z-octadecenoyl)-taurine + H2O = taurine + (9Z)-octadecenoate. The catalysed reaction is (9Z,12Z,15Z)-octadecatrienamide + H2O = (9Z,12Z,15Z)-octadecatrienoate + NH4(+). It catalyses the reaction (5Z,8Z,11Z,14Z)-eicosatetraenamide + H2O = (5Z,8Z,11Z,14Z)-eicosatetraenoate + NH4(+). It carries out the reaction (6Z)-octadecenamide + H2O = (6Z)-octadecenoate + NH4(+). The enzyme catalyses (15Z)-tetracosenamide + H2O = (15Z)-tetracosenoate + NH4(+). The catalysed reaction is (8Z,11Z,14Z)-eicosatrienamide + H2O = (8Z,11Z,14Z)-eicosatrienoate + NH4(+). It catalyses the reaction (11Z,14Z,17Z)-eicosatrienamide + H2O = (11Z,14Z,17Z)-eicosatrienoate + NH4(+). It carries out the reaction (11Z,14Z)-eicosadienamide + H2O = (11Z,14Z)-eicosadienoate + NH4(+). The enzyme catalyses (9Z,12Z)-octadecadienamide + H2O = (9Z,12Z)-octadecadienoate + NH4(+). The catalysed reaction is 1-O-methyl-(5Z,8Z,11Z,14Z)-eicosatetraenoate + H2O = methanol + (5Z,8Z,11Z,14Z)-eicosatetraenoate + H(+). It catalyses the reaction (11Z)-eicosenamide + H2O = (11Z)-eicosenoate + NH4(+). It carries out the reaction N-(9Z-hexadecenoyl) ethanolamine + H2O = (9Z)-hexadecenoate + ethanolamine. The enzyme catalyses N-octadecanoyl ethanolamine + H2O = octadecanoate + ethanolamine. The catalysed reaction is N-docosanoyl-ethanolamine + H2O = docosanoate + ethanolamine. It catalyses the reaction N-tetracosanoyl-taurine + H2O = tetracosanoate + taurine. It carries out the reaction N-(15Z-tetracosenoyl)-ethanolamine + H2O = (15Z)-tetracosenoate + ethanolamine. The enzyme catalyses N-docosanoyl-taurine + H2O = docosanoate + taurine. The catalysed reaction is N-(15Z-tetracosenoyl)-taurine + H2O = (15Z)-tetracosenoate + taurine. It catalyses the reaction N-tricosanoyl-taurine + H2O = tricosanoate + taurine. It carries out the reaction (9Z)-octadecenoate + glycine = N-(9Z-octadecenoyl)glycine + H2O. The enzyme catalyses N-(5Z,8Z,11Z,14Z)-eicosatetraenoyl-glycine + H2O = (5Z,8Z,11Z,14Z)-eicosatetraenoate + glycine. The catalysed reaction is N-(5Z,8Z,11Z,14Z-eicosatetraenoyl)-L-serine + H2O = (5Z,8Z,11Z,14Z)-eicosatetraenoate + L-serine. With respect to regulation, inhibited by O-aryl carbamates and alpha-keto heterocycles. Inhibited by trifluoromethyl ketone. Functionally, catalyzes the hydrolysis of endogenous amidated lipids like the sleep-inducing lipid oleamide ((9Z)-octadecenamide), the endocannabinoid anandamide (N-(5Z,8Z,11Z,14Z-eicosatetraenoyl)-ethanolamine), as well as other fatty amides, to their corresponding fatty acids, thereby regulating the signaling functions of these molecules. Hydrolyzes polyunsaturated substrate anandamide preferentially as compared to monounsaturated substrates. It can also catalyze the hydrolysis of the endocannabinoid 2-arachidonoylglycerol (2-(5Z,8Z,11Z,14Z-eicosatetraenoyl)-glycerol). FAAH cooperates with PM20D1 in the hydrolysis of amino acid-conjugated fatty acids such as N-fatty acyl glycine and N-fatty acyl-L-serine, thereby acting as a physiological regulator of specific subsets of intracellular, but not of extracellular, N-fatty acyl amino acids. In Homo sapiens (Human), this protein is Fatty-acid amide hydrolase 1 (FAAH).